Consider the following 341-residue polypeptide: Ketol-acid reductoisomerase (NADP(+)) (341 aa).

A KARI N-terminal Rossmann domain is found at 2 to 182 (AKIYYNDDAD…GGTRAGVIET (181 aa)). NADP(+) contacts are provided by residues 25–28 (YGSQ), Ser-51, Ser-53, and 83–86 (DQVQ). Residue His-108 is part of the active site. Gly-134 is a binding site for NADP(+). Residues 183–328 (TFTEETESDL…RKLRSLFAWE (146 aa)) form the KARI C-terminal knotted domain. Asp-191, Glu-195, Glu-227, and Glu-231 together coordinate Mg(2+). Ser-252 provides a ligand contact to substrate.

Belongs to the ketol-acid reductoisomerase family. Mg(2+) is required as a cofactor.

The catalysed reaction is (2R)-2,3-dihydroxy-3-methylbutanoate + NADP(+) = (2S)-2-acetolactate + NADPH + H(+). The enzyme catalyses (2R,3R)-2,3-dihydroxy-3-methylpentanoate + NADP(+) = (S)-2-ethyl-2-hydroxy-3-oxobutanoate + NADPH + H(+). The protein operates within amino-acid biosynthesis; L-isoleucine biosynthesis; L-isoleucine from 2-oxobutanoate: step 2/4. It functions in the pathway amino-acid biosynthesis; L-valine biosynthesis; L-valine from pyruvate: step 2/4. Involved in the biosynthesis of branched-chain amino acids (BCAA). Catalyzes an alkyl-migration followed by a ketol-acid reduction of (S)-2-acetolactate (S2AL) to yield (R)-2,3-dihydroxy-isovalerate. In the isomerase reaction, S2AL is rearranged via a Mg-dependent methyl migration to produce 3-hydroxy-3-methyl-2-ketobutyrate (HMKB). In the reductase reaction, this 2-ketoacid undergoes a metal-dependent reduction by NADPH to yield (R)-2,3-dihydroxy-isovalerate. This is Ketol-acid reductoisomerase (NADP(+)) from Kocuria rhizophila (strain ATCC 9341 / DSM 348 / NBRC 103217 / DC2201).